The chain runs to 193 residues: MKELEERIVQQGTVKPGNVLKVDAFLNHQCDVELFDHMGAAWAEHFKGKTIDKILTIEASGIGIACVVARHFGNVPVVFAKKAQSINLDGDQYTTTVYSFTKQKEFPVIVSKRYLNEGDHVLLIDDFLANGKALKGLIELCHEAGATVEGIGIAVEKGFQGGGDQLREEGYDVDSLAIVESMDPENGTIEFRS.

Leucine 20 and asparagine 27 together coordinate xanthine. Residue 129 to 133 (ANGKA) participates in 5-phospho-alpha-D-ribose 1-diphosphate binding. A xanthine-binding site is contributed by lysine 157.

Belongs to the purine/pyrimidine phosphoribosyltransferase family. Xpt subfamily. Homodimer.

It localises to the cytoplasm. It carries out the reaction XMP + diphosphate = xanthine + 5-phospho-alpha-D-ribose 1-diphosphate. The protein operates within purine metabolism; XMP biosynthesis via salvage pathway; XMP from xanthine: step 1/1. Converts the preformed base xanthine, a product of nucleic acid breakdown, to xanthosine 5'-monophosphate (XMP), so it can be reused for RNA or DNA synthesis. This is Xanthine phosphoribosyltransferase from Bifidobacterium adolescentis (strain ATCC 15703 / DSM 20083 / NCTC 11814 / E194a).